Here is a 187-residue protein sequence, read N- to C-terminus: UPF0200 protein APE_1753.1 (187 aa).

An ATP-binding site is contributed by 13 to 20 (GLPGSGKS).

It belongs to the UPF0200 family.

This is UPF0200 protein APE_1753.1 from Aeropyrum pernix (strain ATCC 700893 / DSM 11879 / JCM 9820 / NBRC 100138 / K1).